The chain runs to 376 residues: N-acetyldiaminopimelate deacetylase (376 aa).

Aspartate 69 is an active-site residue. Glutamate 128 serves as the catalytic Proton acceptor.

It belongs to the peptidase M20A family. N-acetyldiaminopimelate deacetylase subfamily.

It catalyses the reaction N-acetyl-(2S,6S)-2,6-diaminopimelate + H2O = (2S,6S)-2,6-diaminopimelate + acetate. It participates in amino-acid biosynthesis; L-lysine biosynthesis via DAP pathway; LL-2,6-diaminopimelate from (S)-tetrahydrodipicolinate (acetylase route): step 3/3. Catalyzes the conversion of N-acetyl-diaminopimelate to diaminopimelate and acetate. This Bacillus cereus (strain ATCC 14579 / DSM 31 / CCUG 7414 / JCM 2152 / NBRC 15305 / NCIMB 9373 / NCTC 2599 / NRRL B-3711) protein is N-acetyldiaminopimelate deacetylase.